The following is a 161-amino-acid chain: MPSFDIVSEVDKQEIRNAVDQLNKEVSTRFDFKGSDARAEQTDYELYLYADDEFKLGQVMDILMTKFTKREIDVRCLEKGQTEKISGNKVKQKVTVKTGVESDLAKKIIKLVKDSKLKVQASIQGEVVRVTGAKRDILQEAIQLVKGSITELPLQFRNFRD.

This sequence belongs to the YajQ family.

In terms of biological role, nucleotide-binding protein. The polypeptide is Nucleotide-binding protein NE2248 (Nitrosomonas europaea (strain ATCC 19718 / CIP 103999 / KCTC 2705 / NBRC 14298)).